The chain runs to 192 residues: Crossover junction endodeoxyribonuclease RuvC (192 aa).

Catalysis depends on residues D8, E67, and D139. D8, E67, and D139 together coordinate Mg(2+).

This sequence belongs to the RuvC family. As to quaternary structure, homodimer which binds Holliday junction (HJ) DNA. The HJ becomes 2-fold symmetrical on binding to RuvC with unstacked arms; it has a different conformation from HJ DNA in complex with RuvA. In the full resolvosome a probable DNA-RuvA(4)-RuvB(12)-RuvC(2) complex forms which resolves the HJ. Mg(2+) is required as a cofactor.

It localises to the cytoplasm. The enzyme catalyses Endonucleolytic cleavage at a junction such as a reciprocal single-stranded crossover between two homologous DNA duplexes (Holliday junction).. Functionally, the RuvA-RuvB-RuvC complex processes Holliday junction (HJ) DNA during genetic recombination and DNA repair. Endonuclease that resolves HJ intermediates. Cleaves cruciform DNA by making single-stranded nicks across the HJ at symmetrical positions within the homologous arms, yielding a 5'-phosphate and a 3'-hydroxyl group; requires a central core of homology in the junction. The consensus cleavage sequence is 5'-(A/T)TT(C/G)-3'. Cleavage occurs on the 3'-side of the TT dinucleotide at the point of strand exchange. HJ branch migration catalyzed by RuvA-RuvB allows RuvC to scan DNA until it finds its consensus sequence, where it cleaves and resolves the cruciform DNA. This chain is Crossover junction endodeoxyribonuclease RuvC, found in Actinobacillus pleuropneumoniae serotype 5b (strain L20).